Here is a 232-residue protein sequence, read N- to C-terminus: Ribonuclease 3 (232 aa).

The 130-residue stretch at 5 to 134 folds into the RNase III domain; the sequence is ENLLFDRFGL…FLGALLLDKG (130 aa). Residue E47 participates in Mg(2+) binding. D51 is an active-site residue. The Mg(2+) site is built by D120 and E123. The active site involves E123. Residues 160–229 enclose the DRBM domain; it reads DYKTKLQELL…AKNAFEKENH (70 aa).

Belongs to the ribonuclease III family. In terms of assembly, homodimer. Mg(2+) serves as cofactor.

The protein resides in the cytoplasm. It catalyses the reaction Endonucleolytic cleavage to 5'-phosphomonoester.. Digests double-stranded RNA. Involved in the processing of primary rRNA transcript to yield the immediate precursors to the large and small rRNAs (23S and 16S). Processes some mRNAs, and tRNAs when they are encoded in the rRNA operon. Processes pre-crRNA and tracrRNA of type II CRISPR loci if present in the organism. In Streptococcus gordonii (strain Challis / ATCC 35105 / BCRC 15272 / CH1 / DL1 / V288), this protein is Ribonuclease 3.